We begin with the raw amino-acid sequence, 351 residues long: MGRAARWFKGMFGTKKSKDRSHVSGGDSVKGGDHSGDFNVPRDSVLLGTILTDTEKDQNKNAIAVATATATAADAAVSAAVVRLTSEGRAGDIIITKEERWAAVKIQKVFRGSLARKALRALKGIVKLQALVRGYLVRKRAAAMLQSIQTLIRVQTAMRSKRINRSLNKEYNNMFQPRQSFDKFDEATFDDRRTKIVEKDDRYMRRSSSRSRSRQVHNVVSMSDYEGDFVYKGNDLELCFSDEKWKFATAQNTPRLLHHHSANNRYYVMQSPAKSVGGKALCDYESSVSTPGYMEKTKSFKAKVRSHSAPRQRSERQRLSLDEVMASKSSVSGVSMSHQHPPRHSCSCDPL.

The segment at 15–37 is disordered; it reads KKSKDRSHVSGGDSVKGGDHSGD. A calmodulin-binding region spans residues 98–114; that stretch reads EERWAAVKIQKVFRGSL. 2 IQ domains span residues 99–127 and 128–150; these read ERWAAVKIQKVFRGSLARKALRALKGIVK and LQALVRGYLVRKRAAAMLQSIQT. A Nuclear localization signal motif is present at residues 191-198; it reads DRRTKIVE. Basic residues predominate over residues 299-310; that stretch reads SFKAKVRSHSAP. Residues 299-351 are disordered; the sequence is SFKAKVRSHSAPRQRSERQRLSLDEVMASKSSVSGVSMSHQHPPRHSCSCDPL. The segment covering 312-321 has biased composition (basic and acidic residues); that stretch reads QRSERQRLSL. The segment covering 324–337 has biased composition (low complexity); sequence VMASKSSVSGVSMS.

Belongs to the IQD family. As to quaternary structure, binds to multiple calmodulin (CaM) in the presence of Ca(2+) and CaM-like proteins.

It localises to the nucleus. The protein resides in the nucleus envelope. It is found in the cytoplasm. The protein localises to the cytoskeleton. May be involved in cooperative interactions with calmodulins or calmodulin-like proteins. Recruits calmodulin proteins to microtubules, thus being a potential scaffold in cellular signaling and trafficking. May associate with nucleic acids and regulate gene expression at the transcriptional or post-transcriptional level. The chain is Protein IQ-DOMAIN 27 from Arabidopsis thaliana (Mouse-ear cress).